Here is a 213-residue protein sequence, read N- to C-terminus: Adenylate kinase (213 aa).

10–15 is a binding site for ATP; it reads GAGKGT. An NMP region spans residues 30–59; that stretch reads AVGDIFRTIIKTSTSEAELINNYVKQGALI. Residues Arg36, 57-59, 85-88, and Gln92 each bind AMP; these read ALI and GYPR. The segment at 123 to 161 is LID; it reads GRYSCKNCGKIYNIHFLQPKIEHVCDVCSSSVFDYRKDD. Arg124 lines the ATP pocket. Positions 127 and 130 each coordinate Zn(2+). Residue 133-134 participates in ATP binding; the sequence is IY. Residues Cys147 and Cys150 each coordinate Zn(2+). AMP is bound by residues Arg158 and Arg169. Residue Lys197 coordinates ATP.

The protein belongs to the adenylate kinase family. As to quaternary structure, monomer.

The protein localises to the cytoplasm. The catalysed reaction is AMP + ATP = 2 ADP. It functions in the pathway purine metabolism; AMP biosynthesis via salvage pathway; AMP from ADP: step 1/1. Catalyzes the reversible transfer of the terminal phosphate group between ATP and AMP. Plays an important role in cellular energy homeostasis and in adenine nucleotide metabolism. This Rickettsia prowazekii (strain Madrid E) protein is Adenylate kinase.